Consider the following 520-residue polypeptide: 2-isopropylmalate synthase (520 aa).

The Pyruvate carboxyltransferase domain occupies 12–274 (VVIFDTTLRD…WCNVESTMLT (263 aa)). Aspartate 21, histidine 209, histidine 211, and asparagine 245 together coordinate Mn(2+). Positions 398–520 (KLTSLTVIAG…RDVPSAAAAS (123 aa)) are regulatory domain.

Belongs to the alpha-IPM synthase/homocitrate synthase family. LeuA type 1 subfamily. As to quaternary structure, homodimer. Mn(2+) is required as a cofactor.

It is found in the cytoplasm. It catalyses the reaction 3-methyl-2-oxobutanoate + acetyl-CoA + H2O = (2S)-2-isopropylmalate + CoA + H(+). It participates in amino-acid biosynthesis; L-leucine biosynthesis; L-leucine from 3-methyl-2-oxobutanoate: step 1/4. Functionally, catalyzes the condensation of the acetyl group of acetyl-CoA with 3-methyl-2-oxobutanoate (2-ketoisovalerate) to form 3-carboxy-3-hydroxy-4-methylpentanoate (2-isopropylmalate). This is 2-isopropylmalate synthase from Nitrobacter hamburgensis (strain DSM 10229 / NCIMB 13809 / X14).